A 452-amino-acid chain; its full sequence is Probable E3 ubiquitin-protein ligase ARI15 (452 aa).

The tract at residues 22-256 (SRVYCGICSN…GTSGSCLAPA (235 aa)) is TRIAD supradomain. Zn(2+) contacts are provided by Cys26, Cys29, Cys54, His56, Cys59, Cys62, Cys83, Cys88, Cys128, Cys133, Cys154, Cys156, Cys161, Cys164, His169, Cys174, Cys208, Cys211, Cys229, Cys231, Cys236, Cys239, His246, and Cys252. The segment at 26 to 88 (CGICSNIGDD…TAISCPDRDC (63 aa)) adopts an RING-type 1 zinc-finger fold. An IBR-type zinc finger spans residues 106 to 174 (AMYELYILKS…MLESHRPVTC (69 aa)). The segment at 208–239 (CPHCFIPVEIDGERPWAQFLTCVCSGRFCWKC) adopts an RING-type 2; atypical zinc-finger fold. The RanBP2-type zinc finger occupies 414–445 (NYGGPYWLCDRCTYGNSWFQRACKMCCDPTAS).

It belongs to the RBR family. Ariadne subfamily. Zn(2+) is required as a cofactor. In terms of tissue distribution, ubiquitous.

The catalysed reaction is [E2 ubiquitin-conjugating enzyme]-S-ubiquitinyl-L-cysteine + [acceptor protein]-L-lysine = [E2 ubiquitin-conjugating enzyme]-L-cysteine + [acceptor protein]-N(6)-ubiquitinyl-L-lysine.. The protein operates within protein modification; protein ubiquitination. Might act as an E3 ubiquitin-protein ligase, or as part of E3 complex, which accepts ubiquitin from specific E2 ubiquitin-conjugating enzymes and then transfers it to substrates. The polypeptide is Probable E3 ubiquitin-protein ligase ARI15 (ARI15) (Arabidopsis thaliana (Mouse-ear cress)).